The sequence spans 558 residues: MDFFKKEILDWSIYLSLHYIAHACSNSSTSHIIQEYNLIRTYKKVDKTIVDFLSRWPNLFHILEYGENILHIYSMDDANTNIIIFFLDNVLNINKNGSFIHNLGLSSSINIKEYVYQLVNNDHLDNGIRLMLENGRRTRHFLSYILDTVNIYICILINHGFYIDAVDSYGCTLLHRCIYHYKKSESESYNELIKILLNNGSDVDKKDTHGNTPFILLCKHDIDNVELFEICLENANIDSVDFNGYTPLHYVSCRNKYDFVKSLISKGANVNTRNRFGTTPFYCGIIHGISLIKLYLESDTELEIDNEHIVRHLIIFDAVESLDYLLFRGVIDINYRTIYNETSIYDAVSYNAYNMLVYLLNRNGDFETITTSGCTCISKAVANNNKIIMEVLLSKQPSLKIMILSIIAITKHKQHNTNLLKMCIKYTACMTDYDTLIDVQSLQQYKWYILKCFDEIDIMKRCYIKNKTVFQLVFCTKDINTLMRYGRHPSFVKYTSLDVYGSRVRNIIASIRYRQRLISLLSKKLDVGDKWACFPNEIKYKILENFNDNELSTYLKIL.

ANK repeat units follow at residues 65–95 (YGENILHIYSMDDANTNIIIFFLDNVLNINK), 169–205 (YGCTLLHRCIYHYKKSESESYNELIKILLNNGSDVDK), 209–239 (HGNTPFILLCKHDIDNVELFEICLENANIDS), 243–272 (NGYTPLHYVSCRNKYDFVKSLISKGANVNT), 276–304 (FGTTPFYCGIIHGISLIKLYLESDTELEI), 339–368 (YNETSIYDAVSYNAYNMLVYLLNRNGDFET), and 372–401 (SGCTCISKAVANNNKIIMEVLLSKQPSLKI).

It belongs to the orthopoxvirus OPG189 protein family.

In terms of biological role, contributes to viral release without involving rearrangement of host actin. The chain is Ankyrin repeat protein OPG189 (OPG189) from Homo sapiens (Human).